The chain runs to 493 residues: Cyclin-dependent kinase-like 2 (493 aa).

One can recognise a Protein kinase domain in the interval tyrosine 4–phenylalanine 287. ATP-binding positions include valine 10–valine 18 and lysine 33. Residues lysine 45–glutamate 51 carry the [NKR]KIAxRE motif. Aspartate 126 functions as the Proton acceptor in the catalytic mechanism. Disordered stretches follow at residues valine 311–valine 338 and glycine 363–serine 384. Residues arginine 320–threonine 336 show a composition bias toward basic and acidic residues.

This sequence belongs to the protein kinase superfamily. CMGC Ser/Thr protein kinase family. CDC2/CDKX subfamily.

The protein localises to the cytoplasm. Its subcellular location is the nucleus. The catalysed reaction is L-seryl-[protein] + ATP = O-phospho-L-seryl-[protein] + ADP + H(+). The enzyme catalyses L-threonyl-[protein] + ATP = O-phospho-L-threonyl-[protein] + ADP + H(+). The chain is Cyclin-dependent kinase-like 2 from Pongo abelii (Sumatran orangutan).